The primary structure comprises 103 residues: Co-chaperonin GroES (103 aa).

The protein belongs to the GroES chaperonin family. In terms of assembly, heptamer of 7 subunits arranged in a ring. Interacts with the chaperonin GroEL.

It is found in the cytoplasm. Together with the chaperonin GroEL, plays an essential role in assisting protein folding. The GroEL-GroES system forms a nano-cage that allows encapsulation of the non-native substrate proteins and provides a physical environment optimized to promote and accelerate protein folding. GroES binds to the apical surface of the GroEL ring, thereby capping the opening of the GroEL channel. In Picosynechococcus sp. (strain ATCC 27264 / PCC 7002 / PR-6) (Agmenellum quadruplicatum), this protein is Co-chaperonin GroES.